Consider the following 679-residue polypeptide: Protein polyglycylase TTLL10 (679 aa).

A compositionally biased stretch (basic residues) spans 1–15; sequence MPLHPPARRPHGHRR. 3 disordered regions span residues 1-33, 49-77, and 96-124; these read MPLH…GRLS, GHRA…LMPA, and VSFK…RMGS. Polar residues predominate over residues 18–30; that stretch reads SEAQTEATTQDTG. Residues 96 to 110 show a composition bias toward basic residues; that stretch reads VSFKRPKRSRTHQSH. The TTL domain occupies 172–543; it reads QGPFFYIGGT…TCQKSLHSQK (372 aa). ATP is bound by residues Lys-304, 310-311, 353-356, 366-368, and 409-410; these read QG, QRYV, KFD, and TN. Position 310 (Gln-310) interacts with a protein. Mg(2+) is bound by residues Asp-489, Glu-502, and Asn-504. The disordered stretch occupies residues 605-679; the sequence is DRPAARKSMS…EQRSTSHRGS (75 aa).

The cofactor is Mg(2+).

It localises to the cytoplasm. Its subcellular location is the cytoskeleton. The protein resides in the cell projection. The protein localises to the cilium. It is found in the cilium axoneme. The enzyme catalyses (glycyl)(n)-glycyl-L-glutamyl-[protein] + glycine + ATP = (glycyl)(n+1)-glycyl-L-glutamyl-[protein] + ADP + phosphate + H(+). Functionally, polyglycylase which modifies both tubulin and non-tubulin proteins, generating polyglycine side chains of variable lengths on the gamma-carboxyl groups of specific glutamate residues of target proteins. Involved in the elongation step rather than the initiation step of the polyglycylation reaction. Polyglycylates alpha-tubulin and beta-tubulin. Polyglycylates non-tubulin proteins such as nucleosome assembly protein NAP1. The protein is Protein polyglycylase TTLL10 of Rattus norvegicus (Rat).